Consider the following 603-residue polypeptide: Probable HECT-type ubiquitin ligase-interacting protein creD (603 aa).

Disordered regions lie at residues 375–398 (ELDP…GTLS) and 432–499 (LNIT…MATP). The segment covering 443–455 (TDHESQNDSEHRR) has biased composition (basic and acidic residues). Over residues 465–481 (PSSGSNSHSPSSPVLSR) the composition is skewed to low complexity. Residues 482-492 (RPSDEVDHEHV) are compositionally biased toward basic and acidic residues.

It belongs to the arrestin family. In terms of assembly, interacts with hulA.

Functionally, component of the regulatory network controlling carbon source utilization through ubiquitination and deubiquitination involving creA, creB, creC, creD and acrB. May be involved in signaling by recognizing appropriately phosphorylated substrates via its arrestin domains and then recruit a HECT-type ubiquitin ligase such as hulA, leading to ubiquitination of the substrate, providing a link between ubiquitination and phosphorylation in protein regulation and stability. This chain is Probable HECT-type ubiquitin ligase-interacting protein creD (creD), found in Aspergillus flavus (strain ATCC 200026 / FGSC A1120 / IAM 13836 / NRRL 3357 / JCM 12722 / SRRC 167).